A 378-amino-acid chain; its full sequence is Quinolinate synthase (378 aa).

The iminosuccinate site is built by histidine 59 and serine 80. Cysteine 125 serves as a coordination point for [4Fe-4S] cluster. Residues 151 to 153 (YAN) and serine 168 each bind iminosuccinate. Position 212 (cysteine 212) interacts with [4Fe-4S] cluster. Iminosuccinate contacts are provided by residues 238–240 (HPE) and threonine 255. Cysteine 309 contacts [4Fe-4S] cluster.

Belongs to the quinolinate synthase family. Type 1 subfamily. It depends on [4Fe-4S] cluster as a cofactor.

Its subcellular location is the cytoplasm. The catalysed reaction is iminosuccinate + dihydroxyacetone phosphate = quinolinate + phosphate + 2 H2O + H(+). Its pathway is cofactor biosynthesis; NAD(+) biosynthesis; quinolinate from iminoaspartate: step 1/1. Its function is as follows. Catalyzes the condensation of iminoaspartate with dihydroxyacetone phosphate to form quinolinate. The protein is Quinolinate synthase of Burkholderia orbicola (strain MC0-3).